The sequence spans 238 residues: Large ribosomal subunit protein uL1 (238 aa).

The protein belongs to the universal ribosomal protein uL1 family. In terms of assembly, part of the 50S ribosomal subunit.

Binds directly to 23S rRNA. The L1 stalk is quite mobile in the ribosome, and is involved in E site tRNA release. In terms of biological role, protein L1 is also a translational repressor protein, it controls the translation of the L11 operon by binding to its mRNA. The protein is Large ribosomal subunit protein uL1 of Trichormus variabilis (strain ATCC 29413 / PCC 7937) (Anabaena variabilis).